We begin with the raw amino-acid sequence, 182 residues long: uncharacterized protein (182 aa).

The region spanning 1–170 is the Macro domain; the sequence is MIVKIIKGDI…IFVNIFEREL (170 aa).

This is an uncharacterized protein from Sulfurisphaera tokodaii (strain DSM 16993 / JCM 10545 / NBRC 100140 / 7) (Sulfolobus tokodaii).